Here is a 341-residue protein sequence, read N- to C-terminus: tRNA N6-adenosine threonylcarbamoyltransferase (341 aa).

Positions 111 and 115 each coordinate Fe cation. Substrate contacts are provided by residues 133–137 (VVSGG), D166, G179, D183, and N271. Residue D299 coordinates Fe cation.

This sequence belongs to the KAE1 / TsaD family. Fe(2+) serves as cofactor.

The protein localises to the cytoplasm. The catalysed reaction is L-threonylcarbamoyladenylate + adenosine(37) in tRNA = N(6)-L-threonylcarbamoyladenosine(37) in tRNA + AMP + H(+). In terms of biological role, required for the formation of a threonylcarbamoyl group on adenosine at position 37 (t(6)A37) in tRNAs that read codons beginning with adenine. Is involved in the transfer of the threonylcarbamoyl moiety of threonylcarbamoyl-AMP (TC-AMP) to the N6 group of A37, together with TsaE and TsaB. TsaD likely plays a direct catalytic role in this reaction. This chain is tRNA N6-adenosine threonylcarbamoyltransferase, found in Fusobacterium nucleatum subsp. nucleatum (strain ATCC 25586 / DSM 15643 / BCRC 10681 / CIP 101130 / JCM 8532 / KCTC 2640 / LMG 13131 / VPI 4355).